The chain runs to 252 residues: Neurexophilin-3 (252 aa).

A signal peptide spans 1–22 (MQLTRCCFVFLVQGSLYLVICG). An II region spans residues 23-75 (QDDGPPGSEDPEHDDHEGQPRPRVPRKRGHISPKSRPLANSTLLGLLAPPGEV). Positions 27–59 (PPGSEDPEHDDHEGQPRPRVPRKRGHISPKSRP) are disordered. A compositionally biased stretch (basic residues) spans 45 to 55 (RVPRKRGHISP). Residues Asn-62, Asn-127, Asn-137, and Asn-143 are each glycosylated (N-linked (GlcNAc...) asparagine). The III stretch occupies residues 76–157 (WGVLGQPPNR…LVPPSKAVEF (82 aa)). The segment at 158–166 (HQEQQIFIE) is IV (linker domain). A v (Cys-rich) region spans residues 167–252 (AKASKIFNCR…HSDTPYYPSG (86 aa)).

It belongs to the neurexophilin family. May be proteolytically processed at the boundary between the N-terminal non-conserved and the central conserved domain in neuron-like cells. In terms of tissue distribution, highest level in brain, present also in lung, kidney and testis.

The protein resides in the secreted. In terms of biological role, may be signaling molecules that resemble neuropeptides. Ligand for alpha-neurexins. The sequence is that of Neurexophilin-3 (Nxph3) from Mus musculus (Mouse).